The sequence spans 275 residues: 2,3,4,5-tetrahydropyridine-2,6-dicarboxylate N-succinyltransferase (275 aa).

Substrate-binding residues include arginine 106 and aspartate 143.

This sequence belongs to the transferase hexapeptide repeat family. Homotrimer.

It is found in the cytoplasm. It catalyses the reaction (S)-2,3,4,5-tetrahydrodipicolinate + succinyl-CoA + H2O = (S)-2-succinylamino-6-oxoheptanedioate + CoA. It participates in amino-acid biosynthesis; L-lysine biosynthesis via DAP pathway; LL-2,6-diaminopimelate from (S)-tetrahydrodipicolinate (succinylase route): step 1/3. The protein is 2,3,4,5-tetrahydropyridine-2,6-dicarboxylate N-succinyltransferase of Ralstonia nicotianae (strain ATCC BAA-1114 / GMI1000) (Ralstonia solanacearum).